We begin with the raw amino-acid sequence, 606 residues long: Ectonucleoside triphosphate diphosphohydrolase 7 (606 aa).

The Cytoplasmic portion of the chain corresponds to 1–28 (MARISFSYLCPASWYFTVPTVSPFLRQR). Residues 29 to 49 (VAFLGLFFIPCVLLLLLIMDL) form a helical membrane-spanning segment. At 50–548 (RHWATSLPRD…PAHGSWLRLS (499 aa)) the chain is on the vesicular side. E217 (proton acceptor) is an active-site residue. A glycan (N-linked (GlcNAc...) asparagine) is linked at N330. C448 and C477 form a disulfide bridge. The chain crosses the membrane as a helical span at residues 549 to 569 (FVYNHYLFFACTLVVLLAIVL). Residues 570-606 (YLLRIHRIHRRQTRASAPLDLLWIEQVVPMIGVQVGP) lie on the Cytoplasmic side of the membrane.

It belongs to the GDA1/CD39 NTPase family. Requires Ca(2+) as cofactor. Mg(2+) serves as cofactor. In terms of tissue distribution, widely expressed. Expressed at high level in brain, kidney, liver, testis and small intestin. Weakly expressed in lung, thymus and heart.

The protein resides in the cytoplasmic vesicle membrane. It catalyses the reaction a ribonucleoside 5'-triphosphate + H2O = a ribonucleoside 5'-diphosphate + phosphate + H(+). The catalysed reaction is UTP + H2O = UDP + phosphate + H(+). The enzyme catalyses GTP + H2O = GDP + phosphate + H(+). It carries out the reaction CTP + H2O = CDP + phosphate + H(+). It catalyses the reaction ATP + H2O = ADP + phosphate + H(+). Functionally, catalyzes the hydrolysis of nucleoside triphosphates and diphosphates in a calcium- or magnesium-dependent manner. Preferentially hydrolyzes nucleoside 5'-triphosphates, with substrate preference for UTP &gt; GTP &gt; CTP. Hydrolyzes nucleoside diphosphates only to a minor extent. In contrast to its human ortholog is able to hydrolyze ATP. In the epithelial cells of small intestine controls luminal ATP levels, therefore regulating Th17-cell development. The chain is Ectonucleoside triphosphate diphosphohydrolase 7 (Entpd7) from Mus musculus (Mouse).